The primary structure comprises 202 residues: MFISFEGTEGVGKTTLIRKLYEHFEASGKQVVLTREPGGTPLAEQIRSLLLAVNHDEPMSSDTELLLMYAARAQHLQQVIVPALADEKLVLSDRFTDASYAYQCVGRGLSKDKLNTLNQTFVSHMPDITFWLDAPIELGMSRARERGALDRFEQEKVEFFQRVRQGYQQLHELYPERIKRLDATQAPEIVFQEALEHIQALV.

Gly-7 to Thr-14 provides a ligand contact to ATP.

It belongs to the thymidylate kinase family.

It carries out the reaction dTMP + ATP = dTDP + ADP. Functionally, phosphorylation of dTMP to form dTDP in both de novo and salvage pathways of dTTP synthesis. The polypeptide is Thymidylate kinase (Acinetobacter baylyi (strain ATCC 33305 / BD413 / ADP1)).